Reading from the N-terminus, the 465-residue chain is Glutamate--tRNA ligase (465 aa).

The short motif at 11 to 21 (PSPTGFIHLGN) is the 'HIGH' region element. A compositionally biased stretch (basic and acidic residues) spans 120-131 (KPRYDGTWRPEP). Positions 120–139 (KPRYDGTWRPEPGKVLPTPP) are disordered. The short motif at 243–247 (KMSKR) is the 'KMSKS' region element. Lys-246 lines the ATP pocket.

This sequence belongs to the class-I aminoacyl-tRNA synthetase family. Glutamate--tRNA ligase type 1 subfamily. Monomer.

The protein localises to the cytoplasm. It catalyses the reaction tRNA(Glu) + L-glutamate + ATP = L-glutamyl-tRNA(Glu) + AMP + diphosphate. Its function is as follows. Catalyzes the attachment of glutamate to tRNA(Glu) in a two-step reaction: glutamate is first activated by ATP to form Glu-AMP and then transferred to the acceptor end of tRNA(Glu). The polypeptide is Glutamate--tRNA ligase (Ralstonia nicotianae (strain ATCC BAA-1114 / GMI1000) (Ralstonia solanacearum)).